A 761-amino-acid chain; its full sequence is Proton-coupled zinc antiporter SLC30A5 (761 aa).

M1 is subject to N-acetylmethionine. Over 1 to 29 (MEEKYGGDARPGPGGGLGPVDVPSARLTR) the chain is Cytoplasmic. The helical transmembrane segment at 30–46 (YILLLCLTKCLKAVGLF) threads the bilayer. Over 47–54 (ESYDLLKA) the chain is Lumenal. The chain crosses the membrane as a helical span at residues 55–75 (VHIVQFIFILKLGTAFFMVLF). Residues 76–96 (QKPFSSGKPITKHQWIKIFKH) are Cytoplasmic-facing. A helical membrane pass occupies residues 97 to 117 (AVAGCIISLLWFFGLTLCGPL). R118 is a topological domain (lumenal). A helical membrane pass occupies residues 119-139 (TLLLFEHSDIVVISLLSVLFT). At 140–150 (SSGGGPAKTRG) the chain is on the cytoplasmic side. A helical transmembrane segment spans residues 151–171 (AAFFIIAVICLLLFDNDDLMA). At 172-191 (KMAEHPEGHHDSALTHMLYT) the chain is on the lumenal side. Residues 192–212 (AIAFLGVADHKGGVLLLVLAL) form a helical membrane-spanning segment. The Cytoplasmic portion of the chain corresponds to 213–236 (CCKVGFHTASRKLSIDVGGAKRLQ). A helical transmembrane segment spans residues 237-257 (ALSQLVSVFLLCPWVIVLSVT). Residues 258 to 264 (TESKVES) lie on the Lumenal side of the membrane. A helical transmembrane segment spans residues 265–285 (WFSLIMPFTTVIFFVMILDFY). Topologically, residues 286-301 (MDSVCSVKMDVSKCAR) are cytoplasmic. A helical transmembrane segment spans residues 302-322 (YGSFPIFISALLFGNFWTHPI). Residues 323–340 (TDQLRAMNRAAHQESTEH) lie on the Lumenal side of the membrane. Residues 341–361 (VLSGGVVVSAVFFILSANILS) traverse the membrane as a helical segment. Residues 362-416 (SPSKRGQKGTLIGYSPEGTPLYHFMGDAFQHSSQSVPRFIKDSLKQVLEESDSRQ) lie on the Cytoplasmic side of the membrane. Residues 417–437 (IFYFLCLNLLFTFVELFYGVL) form a helical membrane-spanning segment. The mediates homodimerization with SLC30A6 stretch occupies residues 418-636 (FYFLCLNLLF…VLIFLSVIPL (219 aa)). Residues 438-446 (TNSLGLISD) are Lumenal-facing. A helical transmembrane segment spans residues 447 to 467 (GFHMLFDCSALVMGLFAALMS). Zn(2+) is bound by residues H449 and D453. Over 468–481 (RWKATRIFSYGYGR) the chain is Cytoplasmic. Residues 482 to 502 (IEILSGFINGLFLIVIAFFVF) form a helical membrane-spanning segment. The Lumenal segment spans residues 503–518 (MESVARLIDPPELDTN). A helical transmembrane segment spans residues 519–539 (MLTPVSVGGLIVNLIGICAFS). The interval 540 to 574 (HAHSHGHGASQGNCHSDHGHSHHAHGHGHDHGHSH) is his-rich loop; required for zinc transport. Residues 540–588 (HAHSHGHGASQGNCHSDHGHSHHAHGHGHDHGHSHGFTGGGMNANMRGV) are Cytoplasmic-facing. The tract at residues 549–576 (SQGNCHSDHGHSHHAHGHGHDHGHSHGF) is disordered. A helical membrane pass occupies residues 589–609 (FLHVLADTLGSIGVIVSTVLI). 2 residues coordinate Zn(2+): H591 and D595. The Lumenal segment spans residues 610 to 613 (EQFG). A helical transmembrane segment spans residues 614 to 634 (WFIADPLCSLFIAVLIFLSVI). The Cytoplasmic segment spans residues 635 to 761 (PLIKDACQVL…KYCKDGTYIM (127 aa)).

It belongs to the cation diffusion facilitator (CDF) transporter (TC 2.A.4) family. SLC30A subfamily. Heterodimer with SLC30A6/ZNT6; form a functional zinc ion transmembrane transporter. Post-translationally, could homodimerize through the formation of dityrosine bonds upon oxidative stress. In terms of tissue distribution, ubiquitously expressed.

It localises to the golgi apparatus. It is found in the golgi stack membrane. The protein resides in the cytoplasmic vesicle. Its subcellular location is the COPII-coated vesicle membrane. The protein localises to the secretory vesicle membrane. It localises to the trans-Golgi network membrane. It carries out the reaction Zn(2+)(in) + 2 H(+)(out) = Zn(2+)(out) + 2 H(+)(in). Its function is as follows. Together with SLC30A6 forms a functional proton-coupled zinc ion antiporter mediating zinc entry into the lumen of organelles along the secretory pathway. By contributing to zinc ion homeostasis within the early secretory pathway, regulates the activation and folding of enzymes like alkaline phosphatases and enzymes involved in phosphatidylinositol glycan anchor biosynthesis. Through the transport of zinc into secretory granules of pancreatic beta-cells, plays an important role in the storage and secretion of insulin. The chain is Proton-coupled zinc antiporter SLC30A5 from Mus musculus (Mouse).